Reading from the N-terminus, the 392-residue chain is S-adenosylmethionine synthase (392 aa).

E10 lines the Mg(2+) pocket. H16 contributes to the ATP binding site. E44 is a K(+) binding site. L-methionine is bound by residues E57 and Q100. ATP is bound by residues 168–170 (DGK), 236–239 (SGRF), D247, 253–254 (RK), A270, K274, and K278. D247 is a binding site for L-methionine. K278 serves as a coordination point for L-methionine.

Belongs to the AdoMet synthase family. Homotetramer. It depends on Mn(2+) as a cofactor. Mg(2+) serves as cofactor. Co(2+) is required as a cofactor. The cofactor is K(+).

Its subcellular location is the cytoplasm. The enzyme catalyses L-methionine + ATP + H2O = S-adenosyl-L-methionine + phosphate + diphosphate. It participates in amino-acid biosynthesis; S-adenosyl-L-methionine biosynthesis; S-adenosyl-L-methionine from L-methionine: step 1/1. Catalyzes the formation of S-adenosylmethionine from methionine and ATP. The reaction comprises two steps that are both catalyzed by the same enzyme: formation of S-adenosylmethionine (AdoMet) and triphosphate, and subsequent hydrolysis of the triphosphate. This chain is S-adenosylmethionine synthase (SAMS), found in Phaseolus lunatus (Lima bean).